We begin with the raw amino-acid sequence, 198 residues long: Imidazoleglycerol-phosphate dehydratase (198 aa).

The protein belongs to the imidazoleglycerol-phosphate dehydratase family.

It is found in the cytoplasm. The catalysed reaction is D-erythro-1-(imidazol-4-yl)glycerol 3-phosphate = 3-(imidazol-4-yl)-2-oxopropyl phosphate + H2O. It functions in the pathway amino-acid biosynthesis; L-histidine biosynthesis; L-histidine from 5-phospho-alpha-D-ribose 1-diphosphate: step 6/9. The chain is Imidazoleglycerol-phosphate dehydratase from Methylobacillus flagellatus (strain ATCC 51484 / DSM 6875 / VKM B-1610 / KT).